The following is a 221-amino-acid chain: PKHD-type hydroxylase PMT_0286 (221 aa).

A Fe2OG dioxygenase domain is found at 80–174; it reads HIHGVMFSRS…RLVCVGWIQS (95 aa). Residues H98, D100, and H155 each contribute to the Fe cation site. R165 provides a ligand contact to 2-oxoglutarate.

Requires Fe(2+) as cofactor. L-ascorbate is required as a cofactor.

The sequence is that of PKHD-type hydroxylase PMT_0286 from Prochlorococcus marinus (strain MIT 9313).